Here is a 322-residue protein sequence, read N- to C-terminus: Phosphatidylserine decarboxylase proenzyme (322 aa).

Active-site charge relay system; for autoendoproteolytic cleavage activity residues include aspartate 90, histidine 147, and serine 254. The active-site Schiff-base intermediate with substrate; via pyruvic acid; for decarboxylase activity is the serine 254. A Pyruvic acid (Ser); by autocatalysis modification is found at serine 254. A disordered region spans residues 294 to 322; sequence EAEPAPLPEEEINAEHDASPLVDDKKDES. A compositionally biased stretch (basic and acidic residues) spans 306–322; it reads NAEHDASPLVDDKKDES.

This sequence belongs to the phosphatidylserine decarboxylase family. PSD-B subfamily. Prokaryotic type I sub-subfamily. In terms of assembly, heterodimer of a large membrane-associated beta subunit and a small pyruvoyl-containing alpha subunit. Pyruvate serves as cofactor. Post-translationally, is synthesized initially as an inactive proenzyme. Formation of the active enzyme involves a self-maturation process in which the active site pyruvoyl group is generated from an internal serine residue via an autocatalytic post-translational modification. Two non-identical subunits are generated from the proenzyme in this reaction, and the pyruvate is formed at the N-terminus of the alpha chain, which is derived from the carboxyl end of the proenzyme. The autoendoproteolytic cleavage occurs by a canonical serine protease mechanism, in which the side chain hydroxyl group of the serine supplies its oxygen atom to form the C-terminus of the beta chain, while the remainder of the serine residue undergoes an oxidative deamination to produce ammonia and the pyruvoyl prosthetic group on the alpha chain. During this reaction, the Ser that is part of the protease active site of the proenzyme becomes the pyruvoyl prosthetic group, which constitutes an essential element of the active site of the mature decarboxylase.

It localises to the cell membrane. The catalysed reaction is a 1,2-diacyl-sn-glycero-3-phospho-L-serine + H(+) = a 1,2-diacyl-sn-glycero-3-phosphoethanolamine + CO2. Its pathway is phospholipid metabolism; phosphatidylethanolamine biosynthesis; phosphatidylethanolamine from CDP-diacylglycerol: step 2/2. Catalyzes the formation of phosphatidylethanolamine (PtdEtn) from phosphatidylserine (PtdSer). The chain is Phosphatidylserine decarboxylase proenzyme from Citrobacter koseri (strain ATCC BAA-895 / CDC 4225-83 / SGSC4696).